A 374-amino-acid chain; its full sequence is Chaperone protein DnaJ (374 aa).

The region spanning aspartate 5–glycine 70 is the J domain. Residues glycine 134–asparagine 212 form a CR-type zinc finger. Residues cysteine 147, cysteine 150, cysteine 164, cysteine 167, cysteine 186, cysteine 189, cysteine 200, and cysteine 203 each coordinate Zn(2+). 4 CXXCXGXG motif repeats span residues cysteine 147 to glycine 154, cysteine 164 to glycine 171, cysteine 186 to glycine 193, and cysteine 200 to glycine 207.

It belongs to the DnaJ family. In terms of assembly, homodimer. Requires Zn(2+) as cofactor.

It is found in the cytoplasm. Functionally, participates actively in the response to hyperosmotic and heat shock by preventing the aggregation of stress-denatured proteins and by disaggregating proteins, also in an autonomous, DnaK-independent fashion. Unfolded proteins bind initially to DnaJ; upon interaction with the DnaJ-bound protein, DnaK hydrolyzes its bound ATP, resulting in the formation of a stable complex. GrpE releases ADP from DnaK; ATP binding to DnaK triggers the release of the substrate protein, thus completing the reaction cycle. Several rounds of ATP-dependent interactions between DnaJ, DnaK and GrpE are required for fully efficient folding. Also involved, together with DnaK and GrpE, in the DNA replication of plasmids through activation of initiation proteins. The polypeptide is Chaperone protein DnaJ (Bordetella petrii (strain ATCC BAA-461 / DSM 12804 / CCUG 43448)).